The sequence spans 548 residues: Natural resistance-associated macrophage protein 1 (548 aa).

Over residues 1–11 (MSGDTGPSKQG) the composition is skewed to polar residues. Positions 1-38 (MSGDTGPSKQGGTRYGSISSPPSPGPQQAPPGGTYLGE) are disordered. Residues 1 to 55 (MSGDTGPSKQGGTRYGSISSPPSPGPQQAPPGGTYLGEKIPIPDTESGAFSLRKL) lie on the Cytoplasmic side of the membrane. A helical transmembrane segment spans residues 56–73 (WAFTGPGFLMSIAFLDPG). Residues 74–82 (NIESDLQAG) lie on the Extracellular side of the membrane. The chain crosses the membrane as a helical span at residues 83–102 (AVAGFKLLWVLLWATVLGLL). Residues 103-139 (CQRLAARLGVVTGKDLGEVCHLYYPKVPRILLWLTIE) lie on the Cytoplasmic side of the membrane. A helical transmembrane segment spans residues 140 to 160 (LAIVGSDMQEVIGTAIAFSLL). At 161–164 (SAGR) the chain is on the extracellular side. The chain crosses the membrane as a helical span at residues 165-184 (IPLWGGVLITVVDTFFFLFL). Over 185-193 (DNYGLRKLE) the chain is Cytoplasmic. A helical transmembrane segment spans residues 194-214 (AFFGFLITIMALTFGYEYVVA). Residues 215–237 (QPAQGALLQGLFLPSCRGCGQPE) are Extracellular-facing. Residues 238 to 256 (LLQAVGIIGAIIMPHNIYL) form a helical membrane-spanning segment. The Cytoplasmic segment spans residues 257-284 (HSSLVKSREVDRSRRADIREANMYFLIE). The chain crosses the membrane as a helical span at residues 285-304 (ATIALSVSFLINLFVMAVFG). Residues 305-346 (QAFYKQTNQAAFNICAKSSLHDYAPIFPRNNLTVAVDIYQGG) are Extracellular-facing. The N-linked (GlcNAc...) asparagine glycan is linked to Asn-335. Residues 347 to 366 (VILGCLFGPAALYIWAVGLL) traverse the membrane as a helical segment. At 367–397 (AAGQSSTMTGTYAGQFVMEGFLKLRWSRFAR) the chain is on the cytoplasmic side. The helical transmembrane segment at 398–415 (VLLTRSCAILPTVLLAVF) threads the bilayer. Residues 416–426 (RDLRDLSGLND) are Extracellular-facing. A helical transmembrane segment spans residues 427 to 447 (LLNVLQSLLLPFAVLPILTFT). Topologically, residues 448–463 (SMPALMQEFANGLVSK) are cytoplasmic. A helical transmembrane segment spans residues 464–485 (VITSSIMVLVCAVNLYFVISYV). The Extracellular portion of the chain corresponds to 486–493 (PSLPHPAY). Residues 494–513 (FSLVALLAAAYLGLTTYLVW) traverse the membrane as a helical segment. Residues 514-548 (TCLITQGATFLAHNSHQRFLYGLPEEDQEKGRTSG) are Cytoplasmic-facing.

This sequence belongs to the NRAMP family.

The protein localises to the late endosome membrane. It localises to the lysosome membrane. It catalyses the reaction Zn(2+)(in) + H(+)(out) = Zn(2+)(out) + H(+)(in). The catalysed reaction is Fe(2+)(in) + H(+)(out) = Fe(2+)(out) + H(+)(in). It carries out the reaction Mn(2+)(in) + H(+)(out) = Mn(2+)(out) + H(+)(in). In terms of biological role, macrophage-specific antiporter that fluxes metal ions in either direction against a proton gradient. Localized to late endosomal lysosomal membranes, delivers bivalent cations from the cytosol into these acidic compartments where they may directly affect antimicrobial activity. Involved in iron metabolism and host natural resistance to infection with intracellular parasites. Pathogen resistance involves sequestration of Fe(2+) and Mn(2+), cofactors of both prokaryotic and eukaryotic catalases and superoxide dismutases, not only to protect the macrophage against its own generation of reactive oxygen species, but to deny the cations to the pathogen for synthesis of its protective enzymes. The chain is Natural resistance-associated macrophage protein 1 (SLC11A1) from Bubalus bubalis (Domestic water buffalo).